The primary structure comprises 92 residues: Small ribosomal subunit protein uS19c (92 aa).

The protein belongs to the universal ribosomal protein uS19 family.

Its subcellular location is the plastid. It localises to the chloroplast. Functionally, protein S19 forms a complex with S13 that binds strongly to the 16S ribosomal RNA. The protein is Small ribosomal subunit protein uS19c of Rhodomonas salina (Cryptomonas salina).